The sequence spans 683 residues: DNA polymerase alpha-associated DNA helicase A (683 aa).

229-236 contributes to the ATP binding site; that stretch reads GPPGTGKT.

The protein belongs to the DNA2/NAM7 helicase family. As to quaternary structure, associates with the hexameric DNA polymerase alpha.

The protein localises to the cytoplasm. Its subcellular location is the nucleus. It catalyses the reaction ATP + H2O = ADP + phosphate + H(+). Its function is as follows. DNA polymerase alpha-associated DNA helicase which may be involved in DNA replication. The protein is DNA polymerase alpha-associated DNA helicase A (HCS1) of Saccharomyces cerevisiae (strain ATCC 204508 / S288c) (Baker's yeast).